Here is a 176-residue protein sequence, read N- to C-terminus: Retinol-binding protein 4-A (176 aa).

Serine 1 is subject to N-acetylserine. 3 disulfides stabilise this stretch: cysteine 3–cysteine 159, cysteine 69–cysteine 173, and cysteine 119–cysteine 128. Residue glutamine 97 participates in substrate binding.

This sequence belongs to the calycin superfamily. Lipocalin family.

The protein localises to the secreted. Its function is as follows. RBP delivers retinol from the liver stores to the peripheral tissues. In plasma, the RBP-retinol complex interacts with transthyretin, this prevents its loss by filtration through the kidney glomeruli. In Oncorhynchus mykiss (Rainbow trout), this protein is Retinol-binding protein 4-A (rbp4a).